We begin with the raw amino-acid sequence, 139 residues long: Thioredoxin-like protein Clot (139 aa).

Positions 1-136 (MTVEKVDATV…LADKVDAVVN (136 aa)) constitute a Thioredoxin domain. Residues C49 and C52 each act as nucleophile in the active site. A disulfide bridge connects residues C49 and C52.

This sequence belongs to the thioredoxin family.

Probable thiol-disulfide oxidoreductase that may participate in various redox reactions. In Oryza sativa subsp. japonica (Rice), this protein is Thioredoxin-like protein Clot.